A 56-amino-acid polypeptide reads, in one-letter code: Large ribosomal subunit protein bL32 (56 aa).

Residues 1–38 (MAVQQNKKSRSKRGMRRSHDSLSTAQLSVDATSGELHR) form a disordered region. The span at 7-16 (KKSRSKRGMR) shows a compositional bias: basic residues. The span at 21–31 (SLSTAQLSVDA) shows a compositional bias: polar residues.

The protein belongs to the bacterial ribosomal protein bL32 family.

The chain is Large ribosomal subunit protein bL32 from Shewanella woodyi (strain ATCC 51908 / MS32).